The sequence spans 388 residues: MTMRIDTDKQMNLLSDKNVAIIGGGPVGLTMAKLLQQNGIDVSVYERDNDREARIFGGTLDLHKGSGQEAMKKAGLLQTYYDLALPMGVNIADKKGNILSTKNVKPENRFDNPEINRNDLRAILLNSLENDTVIWDRKLVMLEPGKKKWTLTFENKPSETADLVILANGGMSKVRKFVTDTEVEETGTFNIQADIHQPEINCPGFFQLCNGNRLMASHQGNLLFANPNNNGALHFGISFKTPDEWKNQTQVDFQNRNSVVDFLLKEFSDWDERYKELIHTTLSFVGLATRIFPLEKPWKSKRPLPITMIGDAAHLMPPFAGQGVNSGLVDALILSDNLADGKFNSIEEAVKNYEQQMFMYGKEAQEESTQNEIEMFKPDFTFQQLLNV.

Arg54 is an NADPH binding site. 3 residues coordinate FAD: Asp61, Arg117, and Asp311.

It belongs to the aromatic-ring hydroxylase family. TetX subfamily. As to quaternary structure, monomer. The cofactor is FAD.

The protein resides in the cytoplasm. It catalyses the reaction a tetracycline + NADPH + O2 + H(+) = an 11a-hydroxytetracycline + NADP(+) + H2O. The enzyme catalyses tetracycline + NADPH + O2 + H(+) = 11a-hydroxytetracycline + NADP(+) + H2O. The catalysed reaction is oxytetracycline + NADPH + O2 + H(+) = 11a-hydroxy-oxytetracycline + NADP(+) + H2O. An FAD-requiring monooxygenase active on some tetracycline antibiotic derivatives, which leads to their inactivation. Hydroxylates carbon 11a of tetracycline and some analogs. In terms of biological role, confers resistance to tetracycline via an oxidoreductase activity; NADPH is more active than NAD. Expression in E.coli leads to breakdown of tetracycline. Confers resistance to doxycycline, chlortetracycline, oxytetracycline and minocycline. In Bacteroides fragilis, this protein is Flavin-dependent monooxygenase.